Here is a 901-residue protein sequence, read N- to C-terminus: PGC-1 and ERR-induced regulator in muscle protein 1 (901 aa).

Disordered regions lie at residues 29–511 (QAGL…MPAS), 564–671 (SLEG…MGPG), and 731–752 (RHQEGRSQAPLLKAGSVPAPPP). The segment covering 100–112 (GQQTPSTSAQSEA) has biased composition (polar residues). Residues 157–178 (GEPAGSPESPVHSAAPQRSPGS) are compositionally biased toward low complexity. 5 stretches are compositionally biased toward polar residues: residues 267–276 (LSTSVSTTEQ), 347–379 (DESQSTSAFNAQPNEPQSTPTFSPQPDEPQSTP), 387–418 (EPQSTSAFNAQPNEPQSTLAFSPQPDEPQSTP), 426–457 (EPQSTPAFNVQPNEPQSTPAFSPQPNEPQSTP), and 465–484 (EPQSTPAFNTQPNEPQSTPT). The segment covering 608–624 (PSSEEPGSGEVSGPLSP) has biased composition (low complexity).

It is found in the cytoplasm. It localises to the nucleus. Its function is as follows. Regulates the expression of selective PPARGC1A/B and ESRRA/B/G target genes with roles in glucose and lipid metabolism, energy transfer, contractile function, muscle mitochondrial biogenesis and oxidative capacity. Required for the efficient induction of MT-CO2, MT-CO3, COX4I1, TFB1M, TFB2M, POLRMT and SIRT3 by PPARGC1A. Positively regulates the PPARGC1A/ESRRG-induced expression of CKMT2, TNNI3 and SLC2A4 and negatively regulates the PPARGC1A/ESRRG-induced expression of PDK4. The chain is PGC-1 and ERR-induced regulator in muscle protein 1 (PERM1) from Bos taurus (Bovine).